The chain runs to 878 residues: Indoleacetate decarboxylase (878 aa).

In terms of domain architecture, PFL spans Asp-42–Leu-750. Cys-500 serves as the catalytic Cysteine radical intermediate. Residue Glu-502 is the Proton acceptor of the active site. In terms of domain architecture, Glycine radical spans Gly-758–Leu-878. At Gly-853 the chain carries Glycine radical.

This sequence belongs to the glycyl radical enzyme (GRE) family. Homodimer (predominantly) and monomer. Post-translationally, requires the activating protein OsIADAE to generate the key active site glycyl radical on Gly-853 that is involved in catalysis.

It catalyses the reaction (indol-3-yl)acetate + H(+) = skatole + CO2. It participates in amino-acid degradation. Its function is as follows. Glycyl radical enzyme that catalyzes the terminal step of tryptophan fermentation, the decarboxylation of indoleacetate to form skatole, a malodorous compound that contributes to the characteristic smell of animal feces. No activity is detected with phenylacetate or p-hydroxyphenylacetate as substrates, indicating high substrate specificity. The chain is Indoleacetate decarboxylase from Tractidigestivibacter scatoligenes (Olsenella scatoligenes).